A 180-amino-acid polypeptide reads, in one-letter code: Large ribosomal subunit protein uL5 (180 aa).

Belongs to the universal ribosomal protein uL5 family. As to quaternary structure, part of the 50S ribosomal subunit; part of the 5S rRNA/L5/L18/L25 subcomplex. Contacts the 5S rRNA and the P site tRNA. Forms a bridge to the 30S subunit in the 70S ribosome.

In terms of biological role, this is one of the proteins that bind and probably mediate the attachment of the 5S RNA into the large ribosomal subunit, where it forms part of the central protuberance. In the 70S ribosome it contacts protein S13 of the 30S subunit (bridge B1b), connecting the 2 subunits; this bridge is implicated in subunit movement. Contacts the P site tRNA; the 5S rRNA and some of its associated proteins might help stabilize positioning of ribosome-bound tRNAs. The polypeptide is Large ribosomal subunit protein uL5 (Streptococcus uberis (strain ATCC BAA-854 / 0140J)).